The following is a 214-amino-acid chain: Octanoyltransferase (214 aa).

The region spanning K31–Y206 is the BPL/LPL catalytic domain. Substrate-binding positions include R70–H77, S137–G139, and G150–A152. The Acyl-thioester intermediate role is filled by C168.

Belongs to the LipB family.

The protein resides in the cytoplasm. It carries out the reaction octanoyl-[ACP] + L-lysyl-[protein] = N(6)-octanoyl-L-lysyl-[protein] + holo-[ACP] + H(+). It functions in the pathway protein modification; protein lipoylation via endogenous pathway; protein N(6)-(lipoyl)lysine from octanoyl-[acyl-carrier-protein]: step 1/2. Functionally, catalyzes the transfer of endogenously produced octanoic acid from octanoyl-acyl-carrier-protein onto the lipoyl domains of lipoate-dependent enzymes. Lipoyl-ACP can also act as a substrate although octanoyl-ACP is likely to be the physiological substrate. In Marinomonas sp. (strain MWYL1), this protein is Octanoyltransferase.